A 224-amino-acid chain; its full sequence is Ras-related protein Rab-11C (224 aa).

17–24 (GDSAVGKS) serves as a coordination point for GTP. Positions 39 to 47 (TKATIGVDF) match the Effector region motif. Residues 65–69 (DTAGQ) and 123–126 (NKSD) contribute to the GTP site. Positions 194 to 224 (QGKKLTPLSDPAPQLTANTTSTHQEKKSGCC) are disordered. 2 S-geranylgeranyl cysteine lipidation sites follow: Cys223 and Cys224.

This sequence belongs to the small GTPase superfamily. Rab family.

It localises to the membrane. The protein is Ras-related protein Rab-11C (rab11C) of Dictyostelium discoideum (Social amoeba).